A 204-amino-acid chain; its full sequence is Guanylate kinase (204 aa).

The Guanylate kinase-like domain maps to 5–184 (GLLIVLSGPS…AVQRIKDIIA (180 aa)). Residue 12–19 (GPSGVGKG) participates in ATP binding.

The protein belongs to the guanylate kinase family.

The protein resides in the cytoplasm. The enzyme catalyses GMP + ATP = GDP + ADP. Functionally, essential for recycling GMP and indirectly, cGMP. The sequence is that of Guanylate kinase from Enterococcus faecalis (strain ATCC 700802 / V583).